A 265-amino-acid polypeptide reads, in one-letter code: MKIGIFDSGIGGLSVLHQAMITMPEADYIFYADVDNVPYGEKTREEVRKLVDHAVGFLVDKGCQAIVLACNTATSAAISYLREKYKLPIIGIEPAVKPAVEHTSETGRRVMVVSTPVTAKGEKLKRLIDKYDDKHVVDVVALPKLVRFAQDDDFDSSDVTDYLKCEFAPYNLNDYSELVLGCTHFNYFKDSFAKLFPDDLEMVDGNTGVSNNLKNTVMKKGIFTEKDKGKKGSVEYYYSDRKMESEAEMKHIKKLHERLERMRQI.

Residues 7 to 8 (DS) and 39 to 40 (YG) contribute to the substrate site. The Proton donor/acceptor role is filled by cysteine 70. Substrate is bound at residue 71–72 (NT). The active-site Proton donor/acceptor is cysteine 182. 183–184 (TH) provides a ligand contact to substrate.

This sequence belongs to the aspartate/glutamate racemases family.

The enzyme catalyses L-glutamate = D-glutamate. It functions in the pathway cell wall biogenesis; peptidoglycan biosynthesis. In terms of biological role, provides the (R)-glutamate required for cell wall biosynthesis. The sequence is that of Glutamate racemase from Lachnospira eligens (strain ATCC 27750 / DSM 3376 / VPI C15-48 / C15-B4) (Eubacterium eligens).